Here is a 117-residue protein sequence, read N- to C-terminus: uncharacterized protein (117 aa).

This is an uncharacterized protein from Escherichia coli (strain K12).